Consider the following 337-residue polypeptide: Ribosomal RNA small subunit methyltransferase C (337 aa).

Belongs to the methyltransferase superfamily. RsmC family. Monomer.

Its subcellular location is the cytoplasm. The catalysed reaction is guanosine(1207) in 16S rRNA + S-adenosyl-L-methionine = N(2)-methylguanosine(1207) in 16S rRNA + S-adenosyl-L-homocysteine + H(+). Specifically methylates the guanine in position 1207 of 16S rRNA in the 30S particle. This chain is Ribosomal RNA small subunit methyltransferase C, found in Proteus mirabilis (strain HI4320).